Reading from the N-terminus, the 156-residue chain is 3-dehydroquinate dehydratase 1 (156 aa).

Residue Tyr32 is the Proton acceptor of the active site. 3 residues coordinate substrate: Asn84, His90, and Asp97. The active-site Proton donor is His110. Residues Leu111–Ser112 and Arg121 contribute to the substrate site.

This sequence belongs to the type-II 3-dehydroquinase family. In terms of assembly, homododecamer.

The catalysed reaction is 3-dehydroquinate = 3-dehydroshikimate + H2O. It participates in metabolic intermediate biosynthesis; chorismate biosynthesis; chorismate from D-erythrose 4-phosphate and phosphoenolpyruvate: step 3/7. Functionally, catalyzes a trans-dehydration via an enolate intermediate. This Ralstonia nicotianae (strain ATCC BAA-1114 / GMI1000) (Ralstonia solanacearum) protein is 3-dehydroquinate dehydratase 1 (aroQ1).